Reading from the N-terminus, the 264-residue chain is SPRY domain-containing SOCS box protein 2 (264 aa).

Over residues 1–18 (MGQTALARGSSSTPSSHA) the composition is skewed to polar residues. The disordered stretch occupies residues 1–53 (MGQTALARGSSSTPSSHALYSDLSPPEGLEELLSAPPPDLGAQRHHGWNPKDC). Positions 21-34 (SDLSPPEGLEELLS) are enriched in low complexity. Positions 26 to 221 (PEGLEELLSA…VRIRYLGERR (196 aa)) constitute a B30.2/SPRY domain. An SOCS box domain is found at 222-264 (AEEPQSLLHLSRLCVRHALGDTRLGQISSLPLPPAMKRYLLYK).

Belongs to the SPSB family. In terms of assembly, component of the probable ECS(SPSB2) E3 ubiquitin-protein ligase complex which contains CUL5, RNF7/RBX2, Elongin BC complex and SPSB2. Interacts with CUL5, RNF7, ELOB and ELOC. Interacts with MET. Interacts (via B30.2/SPRY domain) with PAWR; this interaction occurs in association with the Elongin BC complex. Interacts with NOS2.

Its subcellular location is the cytoplasm. The protein localises to the cytosol. Its pathway is protein modification; protein ubiquitination. Functionally, substrate recognition component of a SCF-like ECS (Elongin BC-CUL2/5-SOCS-box protein) E3 ubiquitin-protein ligase complex which mediates the ubiquitination and subsequent proteasomal degradation of target proteins. Negatively regulates nitric oxide (NO) production and limits cellular toxicity in activated macrophages by mediating the ubiquitination and proteasomal degradation of NOS2. Acts as a bridge which links NOS2 with the ECS E3 ubiquitin ligase complex components ELOC and CUL5. The sequence is that of SPRY domain-containing SOCS box protein 2 (Spsb2) from Rattus norvegicus (Rat).